A 494-amino-acid chain; its full sequence is 4-trimethylaminobutyraldehyde dehydrogenase (494 aa).

Ser2 is modified (N-acetylserine). Lys30 is modified (N6-acetyllysine; alternate). Lys30 bears the N6-succinyllysine; alternate mark. Lys59 bears the N6-succinyllysine mark. NAD(+) is bound by residues Lys180 and 232–236 (GSVPT). The Proton acceptor role is filled by Glu254. Cys288 functions as the Nucleophile in the catalytic mechanism. Lys298 is modified (N6-acetyllysine). An NAD(+)-binding site is contributed by Glu391.

The protein belongs to the aldehyde dehydrogenase family. As to quaternary structure, homotetramer. Detected in lever (at protein level).

It is found in the cytoplasm. The protein resides in the cytosol. It catalyses the reaction 4-(trimethylamino)butanal + NAD(+) + H2O = 4-(trimethylamino)butanoate + NADH + 2 H(+). The enzyme catalyses an aldehyde + NAD(+) + H2O = a carboxylate + NADH + 2 H(+). It carries out the reaction 4-aminobutanal + NAD(+) + H2O = 4-aminobutanoate + NADH + 2 H(+). The catalysed reaction is formaldehyde + NAD(+) + H2O = formate + NADH + 2 H(+). It catalyses the reaction acetaldehyde + NAD(+) + H2O = acetate + NADH + 2 H(+). The enzyme catalyses imidazole-4-acetaldehyde + NAD(+) + H2O = imidazole-4-acetate + NADH + 2 H(+). It carries out the reaction acrolein + NAD(+) + H2O = acrylate + NADH + 2 H(+). The catalysed reaction is (5-hydroxyindol-3-yl)acetaldehyde + NAD(+) + H2O = (5-hydroxyindol-3-yl)acetate + NADH + 2 H(+). It catalyses the reaction 3,4-dihydroxyphenylacetaldehyde + NAD(+) + H2O = 3,4-dihydroxyphenylacetate + NADH + 2 H(+). The enzyme catalyses spermine monoaldehyde + NAD(+) + H2O = N-(2-carboxyethyl)spermidine + NADH + 2 H(+). It carries out the reaction propanal + NAD(+) + H2O = propanoate + NADH + 2 H(+). The catalysed reaction is butanal + NAD(+) + H2O = butanoate + NADH + 2 H(+). It catalyses the reaction pentanal + NAD(+) + H2O = pentanoate + NADH + 2 H(+). The enzyme catalyses hexanal + NAD(+) + H2O = hexanoate + NADH + 2 H(+). It functions in the pathway amine and polyamine biosynthesis; carnitine biosynthesis. Converts gamma-trimethylaminobutyraldehyde into gamma-butyrobetaine with high efficiency (in vitro). Can catalyze the irreversible oxidation of a broad range of aldehydes to the corresponding acids in an NAD-dependent reaction, but with low efficiency. Catalyzes the oxidation of aldehydes arising from biogenic amines and polyamines. This is 4-trimethylaminobutyraldehyde dehydrogenase (Aldh9a1) from Rattus norvegicus (Rat).